Reading from the N-terminus, the 71-residue chain is UPF0346 protein BCB4264_A2283 (71 aa).

It belongs to the UPF0346 family.

The sequence is that of UPF0346 protein BCB4264_A2283 from Bacillus cereus (strain B4264).